The chain runs to 616 residues: Glutamine--fructose-6-phosphate aminotransferase [isomerizing] (616 aa).

C2 acts as the Nucleophile; for GATase activity in catalysis. The Glutamine amidotransferase type-2 domain occupies 2–222 (CGIIGYSGPR…QERIVALSGD (221 aa)). The segment at 70–89 (TGIGHTRWATHGEPSDRNAH) is disordered. SIS domains lie at 289-428 (IRDD…LRGF) and 461-606 (LAHW…VDRP). Residue K611 is the For Fru-6P isomerization activity of the active site.

In terms of assembly, homodimer.

It is found in the cytoplasm. It catalyses the reaction D-fructose 6-phosphate + L-glutamine = D-glucosamine 6-phosphate + L-glutamate. Catalyzes the first step in hexosamine metabolism, converting fructose-6P into glucosamine-6P using glutamine as a nitrogen source. The chain is Glutamine--fructose-6-phosphate aminotransferase [isomerizing] from Tropheryma whipplei (strain TW08/27) (Whipple's bacillus).